The following is a 272-amino-acid chain: Merozoite surface protein 2 (272 aa).

A signal peptide spans 1–20; it reads MKVIKTLSIINFFIFVTFNI. Residues asparagine 22 and asparagine 36 are each glycosylated (N-linked (GlcNAc...) asparagine). Positions 44 to 198 are polymorphic region; sequence AESKPSTGAG…EQTESPELQS (155 aa). The tract at residues 45–233 is disordered; the sequence is ESKPSTGAGG…DSQKECTDGN (189 aa). Residues 51–82 show a composition bias toward gly residues; that stretch reads GAGGSAGGSAGGSAGGSAGGSAGGSAGSGDGN. Tandem repeats lie at residues 53–56, 57–60, 61–64, 65–68, 69–72, and 73–76. The 6 X 4 AA tandem repeats of G-G-S-A stretch occupies residues 53 to 76; sequence GGSAGGSAGGSAGGSAGGSAGGSA. Positions 83-119 are enriched in low complexity; sequence GADAEGSSSTPATTTTTKTTTTTTTTNDAEASTSTSS. Basic and acidic residues predominate over residues 122-137; sequence PNHKNAETNPKGKGEV. Polar residues-rich tracts occupy residues 139–165 and 172–200; these read EPNQANKETQNNSNVQQDSQTKSNVPP and KSPTAQPEQAENSAPTAEQTESPELQSAP. Asparagine 149 carries an N-linked (GlcNAc...) asparagine glycan. N-linked (GlcNAc...) asparagine glycosylation is present at asparagine 221. Cysteine 229 and cysteine 237 are joined by a disulfide. N-linked (GlcNAc...) asparagine glycans are attached at residues asparagine 245 and asparagine 246. Asparagine 246 carries the GPI-anchor amidated asparagine lipid modification. The propeptide at 247–272 is removed in mature form; the sequence is SSNIASINKFVVLISATLVLSFAIFI.

Its subcellular location is the cell membrane. May play a role in the merozoite attachment to the erythrocyte. The chain is Merozoite surface protein 2 from Plasmodium falciparum (isolate 3D7).